Consider the following 211-residue polypeptide: MTNVFIYPNVEFIAGVDEVGRGPLVGAVVTAAVILDPHNPIEGLKDSKKLSEKKRLLLAEEIKQKALAWSLGRAEPAEIDKLNILHATMLAMQRAVENLKIQPHFVLVDGNRIPQLPMSAQAVIKGDSLVAEISAASILAKVARDQEMIELDRRYPEYAFAQHKGYPTKLHLERLAQFGVLPEYRRSFAPVKKLLSTLLSKNHEYVFKIQK.

The RNase H type-2 domain maps to 11-200 (EFIAGVDEVG…VKKLLSTLLS (190 aa)). The a divalent metal cation site is built by D17, E18, and D109.

Belongs to the RNase HII family. It depends on Mn(2+) as a cofactor. Mg(2+) is required as a cofactor.

The protein resides in the cytoplasm. The enzyme catalyses Endonucleolytic cleavage to 5'-phosphomonoester.. In terms of biological role, endonuclease that specifically degrades the RNA of RNA-DNA hybrids. This Histophilus somni (strain 2336) (Haemophilus somnus) protein is Ribonuclease HII.